Reading from the N-terminus, the 581-residue chain is Arginine--tRNA ligase (581 aa).

The short motif at 126–136 (PNLAKEMHVGH) is the 'HIGH' region element.

It belongs to the class-I aminoacyl-tRNA synthetase family. In terms of assembly, monomer.

The protein resides in the cytoplasm. It catalyses the reaction tRNA(Arg) + L-arginine + ATP = L-arginyl-tRNA(Arg) + AMP + diphosphate. The protein is Arginine--tRNA ligase of Shewanella putrefaciens (strain CN-32 / ATCC BAA-453).